We begin with the raw amino-acid sequence, 144 residues long: Maximins 8/H7 (144 aa).

Residues 1–18 (MKFKYIVAVSFLIASAYA) form the signal peptide. Positions 19-43 (RSEENDEQSLSQRDVLEEESLREIR) are excised as a propeptide. Position 70 is an asparagine amide (N70). The propeptide occupies 74 to 123 (TAEDHEVMKRLEAVMRDLDSLDYPEEASERETRGFNQEEIANLFTKKEKR). The residue at position 143 (L143) is a Leucine amide.

The protein belongs to the bombinin family. In terms of tissue distribution, expressed by the skin glands.

The protein resides in the secreted. Functionally, maximin-8 shows antimicrobial activity against bacteria and against the fungus C.albicans. It has little hemolytic activity. In terms of biological role, maximin-H7 shows antimicrobial activity against bacteria and against the fungus C.albicans. Shows strong hemolytic activity. The sequence is that of Maximins 8/H7 from Bombina maxima (Giant fire-bellied toad).